Here is a 237-residue protein sequence, read N- to C-terminus: Ribonuclease PH (237 aa).

Phosphate contacts are provided by residues Arg86 and Gly124–Arg126.

Belongs to the RNase PH family. Homohexameric ring arranged as a trimer of dimers.

It catalyses the reaction tRNA(n+1) + phosphate = tRNA(n) + a ribonucleoside 5'-diphosphate. Its function is as follows. Phosphorolytic 3'-5' exoribonuclease that plays an important role in tRNA 3'-end maturation. Removes nucleotide residues following the 3'-CCA terminus of tRNAs; can also add nucleotides to the ends of RNA molecules by using nucleoside diphosphates as substrates, but this may not be physiologically important. Probably plays a role in initiation of 16S rRNA degradation (leading to ribosome degradation) during starvation. The polypeptide is Ribonuclease PH (Methylorubrum extorquens (strain PA1) (Methylobacterium extorquens)).